We begin with the raw amino-acid sequence, 504 residues long: Glycerol kinase (504 aa).

ADP is bound at residue threonine 16. Positions 16 and 17 each coordinate ATP. A sn-glycerol 3-phosphate-binding site is contributed by threonine 16. Arginine 20 provides a ligand contact to ADP. The sn-glycerol 3-phosphate site is built by arginine 86, glutamate 87, tyrosine 138, and aspartate 247. The glycerol site is built by arginine 86, glutamate 87, tyrosine 138, aspartate 247, and glutamine 248. Residues threonine 269 and glycine 316 each contribute to the ADP site. ATP is bound by residues threonine 269, glycine 316, glutamine 320, and glycine 417. Residues glycine 417 and asparagine 421 each contribute to the ADP site.

The protein belongs to the FGGY kinase family.

It catalyses the reaction glycerol + ATP = sn-glycerol 3-phosphate + ADP + H(+). The protein operates within polyol metabolism; glycerol degradation via glycerol kinase pathway; sn-glycerol 3-phosphate from glycerol: step 1/1. Its activity is regulated as follows. Inhibited by fructose 1,6-bisphosphate (FBP). Functionally, key enzyme in the regulation of glycerol uptake and metabolism. Catalyzes the phosphorylation of glycerol to yield sn-glycerol 3-phosphate. The protein is Glycerol kinase of Trichodesmium erythraeum (strain IMS101).